We begin with the raw amino-acid sequence, 434 residues long: Alpha-enolase (434 aa).

N-acetylserine is present on serine 2. Serine 40 contacts Mg(2+). The residue at position 44 (tyrosine 44) is a Phosphotyrosine. Lysine 60 is subject to N6-acetyllysine; alternate. At lysine 60 the chain carries N6-succinyllysine; alternate. The residue at position 71 (lysine 71) is an N6-acetyllysine. Lysine 89 bears the N6-acetyllysine; alternate mark. Lysine 89 is modified (N6-succinyllysine; alternate). N6-acetyllysine occurs at positions 92 and 126. Substrate contacts are provided by histidine 158 and glutamate 167. N6-acetyllysine is present on residues lysine 193 and lysine 199. Lysine 202 carries the post-translational modification N6-acetyllysine; alternate. A Glycyl lysine isopeptide (Lys-Gly) (interchain with G-Cter in SUMO2); alternate cross-link involves residue lysine 202. Glutamate 210 serves as the catalytic Proton donor. Lysine 228 and lysine 233 each carry N6-acetyllysine; alternate. The residue at position 228 (lysine 228) is an N6-succinyllysine; alternate. Lysine 228 is modified (N6-(2-hydroxyisobutyryl)lysine; alternate). Lysine 233 bears the N6-malonyllysine; alternate mark. Aspartate 245 is a binding site for Mg(2+). Serine 254 is modified (phosphoserine). The residue at position 256 (lysine 256) is an N6-acetyllysine. Serine 263 bears the Phosphoserine mark. At lysine 281 the chain carries N6-acetyllysine; alternate. Lysine 281 carries the post-translational modification N6-(2-hydroxyisobutyryl)lysine; alternate. The residue at position 287 (tyrosine 287) is a Phosphotyrosine. Position 291 is a phosphoserine (serine 291). The Mg(2+) site is built by glutamate 293 and aspartate 318. Substrate-binding residues include glutamate 293 and aspartate 318. An N6-acetyllysine mark is found at lysine 335 and lysine 343. Residue lysine 343 is the Proton acceptor of the active site. Substrate-binding positions include serine 370–serine 373 and lysine 394. A required for interaction with PLG region spans residues alanine 405–lysine 434. An N6-acetyllysine modification is found at lysine 406. The residue at position 420 (lysine 420) is an N6-acetyllysine; alternate. N6-succinyllysine; alternate is present on lysine 420. The residue at position 420 (lysine 420) is an N6-malonyllysine; alternate.

Belongs to the enolase family. In terms of assembly, mammalian enolase is composed of 3 isozyme subunits, alpha, beta and gamma, which can form homodimers or heterodimers which are cell-type and development-specific. ENO1 interacts with PLG in the neuronal plasma membrane and promotes its activation. The C-terminal lysine is required for this binding. In vitro, interacts with several glycolytic enzymes including PKM, PGM, CKM and aldolase. Also binds troponin, in vitro. Interacts with ENO4 and PGAM2. Interacts with CMTM6. The cofactor is Mg(2+). Post-translationally, ISGylated. Lysine 2-hydroxyisobutyrylation (Khib) by p300/EP300 activates the phosphopyruvate hydratase activity. In terms of tissue distribution, testis. Found in the principal piece of sperm tail (at protein level). The alpha/alpha homodimer is expressed in embryo and in most adult tissues. The alpha/beta heterodimer and the beta/beta homodimer are found in striated muscle, and the alpha/gamma heterodimer and the gamma/gamma homodimer in neurons. In striated muscle, expression of ENO1 appears to be independent of fiber type.

Its subcellular location is the cytoplasm. The protein localises to the cell membrane. It catalyses the reaction (2R)-2-phosphoglycerate = phosphoenolpyruvate + H2O. The protein operates within carbohydrate degradation; glycolysis; pyruvate from D-glyceraldehyde 3-phosphate: step 4/5. Its function is as follows. Glycolytic enzyme the catalyzes the conversion of 2-phosphoglycerate to phosphoenolpyruvate. In addition to glycolysis, involved in various processes such as growth control, hypoxia tolerance and allergic responses. May also function in the intravascular and pericellular fibrinolytic system due to its ability to serve as a receptor and activator of plasminogen on the cell surface of several cell-types such as leukocytes and neurons. Stimulates immunoglobulin production. In Mus musculus (Mouse), this protein is Alpha-enolase (Eno1).